The primary structure comprises 358 residues: DnaJ homolog subfamily C member 18 (358 aa).

The 65-residue stretch at 82–146 (NYYEILGVSR…DKRLRYDEYG (65 aa)) folds into the J domain. A helical transmembrane segment spans residues 228–248 (AFIQLLPVLVIVIISVITQLL).

It localises to the endoplasmic reticulum membrane. The sequence is that of DnaJ homolog subfamily C member 18 (DNAJC18) from Macaca fascicularis (Crab-eating macaque).